The chain runs to 318 residues: MPREDRATWKSNYFLKIIQLLDDYPKCFIVGADNVGSKQMQQIRMSLRGKAVVLMGKNTMMRKAIRGHLENNPALEKLLPHIRGNVGFVFTKEDLTEIRDMLLANKVPAAARAGAIAPCEVTVPAQNTGLGPEKTSFFQALGITTKISRGTIEILSDVQLIKTGDKVGASEATLLNMLNISPFSFGLIIQQVFDNGSIYNPEVLDITEDTLHSRFLEGVRNVASVCLQIGYPTVASVPHSIINGYKRVLALSVETEYTFPLAEKVKAFLADPSAFVAAAPVAAASTAAPAAAAAAPAKVEAKEESEESDEDMGFGLFD.

A Phosphotyrosine modification is found at tyrosine 24. Threonine 59 is modified (phosphothreonine). Residue lysine 264 forms a Glycyl lysine isopeptide (Lys-Gly) (interchain with G-Cter in ubiquitin) linkage. Lysine 298 is covalently cross-linked (Glycyl lysine isopeptide (Lys-Gly) (interchain with G-Cter in SUMO1); alternate). Residue lysine 298 forms a Glycyl lysine isopeptide (Lys-Gly) (interchain with G-Cter in SUMO2); alternate linkage. The disordered stretch occupies residues 298-318 (KVEAKEESEESDEDMGFGLFD). The segment covering 303–312 (EESEESDEDM) has biased composition (acidic residues). Phosphoserine is present on residues serine 305 and serine 308.

It belongs to the universal ribosomal protein uL10 family. As to quaternary structure, P0 forms a pentameric complex by interaction with dimers of P1 and P2. Identified in a IGF2BP1-dependent mRNP granule complex containing untranslated mRNAs. Interacts with APEX1. Interacts with FMR1 isoform 6. Ubiquitinated at Lys-264 by RNF14 and RNF25 in response to ribosome collisions (ribosome stalling).

Its subcellular location is the nucleus. It is found in the cytoplasm. Its function is as follows. Ribosomal protein P0 is the functional equivalent of E.coli protein L10. This is Large ribosomal subunit protein uL10 (RPLP0) from Oryctolagus cuniculus (Rabbit).